The chain runs to 124 residues: MIRMAFAVACGGVIGTLLRFALATWVSAQWPRHFYLATVAVNLLGCLLIGYLYATFLARPDISPELRGALIIGFLGALTTFSSFSLDALRLLESGQLATAFAYVGGSVLGGLLAAWAGLALARL.

A run of 4 helical transmembrane segments spans residues 6–26, 34–54, 69–89, and 101–121; these read FAVACGGVIGTLLRFALATWV, FYLATVAVNLLGCLLIGYLYA, ALIIGFLGALTTFSSFSLDAL, and FAYVGGSVLGGLLAAWAGLAL. The Na(+) site is built by G76 and T79.

Belongs to the fluoride channel Fluc/FEX (TC 1.A.43) family.

The protein resides in the cell inner membrane. It catalyses the reaction fluoride(in) = fluoride(out). With respect to regulation, na(+) is not transported, but it plays an essential structural role and its presence is essential for fluoride channel function. Functionally, fluoride-specific ion channel. Important for reducing fluoride concentration in the cell, thus reducing its toxicity. This Stutzerimonas stutzeri (strain A1501) (Pseudomonas stutzeri) protein is Fluoride-specific ion channel FluC.